The primary structure comprises 156 residues: Small ribosomal subunit protein uS7 (156 aa).

Belongs to the universal ribosomal protein uS7 family. In terms of assembly, part of the 30S ribosomal subunit. Contacts proteins S9 and S11.

One of the primary rRNA binding proteins, it binds directly to 16S rRNA where it nucleates assembly of the head domain of the 30S subunit. Is located at the subunit interface close to the decoding center, probably blocks exit of the E-site tRNA. In Shewanella frigidimarina (strain NCIMB 400), this protein is Small ribosomal subunit protein uS7.